The sequence spans 175 residues: Ribosome maturation factor RimM (175 aa).

Residues 96 to 175 (EGDFYWHDLI…TIEVDWDAGF (80 aa)) enclose the PRC barrel domain.

The protein belongs to the RimM family. As to quaternary structure, binds ribosomal protein uS19.

The protein localises to the cytoplasm. An accessory protein needed during the final step in the assembly of 30S ribosomal subunit, possibly for assembly of the head region. Essential for efficient processing of 16S rRNA. May be needed both before and after RbfA during the maturation of 16S rRNA. It has affinity for free ribosomal 30S subunits but not for 70S ribosomes. This is Ribosome maturation factor RimM from Histophilus somni (strain 129Pt) (Haemophilus somnus).